The chain runs to 370 residues: Dihydroorotate dehydrogenase (quinone) (370 aa).

Residues 67-71 (AGFDK) and T91 contribute to the FMN site. K71 provides a ligand contact to substrate. 116-120 (NRMGF) contacts substrate. N146 and N179 together coordinate FMN. N179 is a substrate binding site. S182 (nucleophile) is an active-site residue. Substrate is bound at residue N184. The FMN site is built by K222 and T250. A substrate-binding site is contributed by 251 to 252 (NT). FMN is bound by residues G276, G305, and 326–327 (YS).

The protein belongs to the dihydroorotate dehydrogenase family. Type 2 subfamily. In terms of assembly, monomer. Requires FMN as cofactor.

Its subcellular location is the cell membrane. The enzyme catalyses (S)-dihydroorotate + a quinone = orotate + a quinol. It functions in the pathway pyrimidine metabolism; UMP biosynthesis via de novo pathway; orotate from (S)-dihydroorotate (quinone route): step 1/1. Functionally, catalyzes the conversion of dihydroorotate to orotate with quinone as electron acceptor. The sequence is that of Dihydroorotate dehydrogenase (quinone) from Streptomyces griseus subsp. griseus (strain JCM 4626 / CBS 651.72 / NBRC 13350 / KCC S-0626 / ISP 5235).